A 353-amino-acid chain; its full sequence is Protein Wnt-11b-2 (353 aa).

An N-terminal signal peptide occupies residues 1–22 (MALIRHCVTLLLILCCSRLCGA). N31, N38, and N88 each carry an N-linked (GlcNAc...) asparagine glycan. Disulfide bonds link C78–C89, C128–C136, C138–C155, C208–C222, and C210–C217. S214 carries O-palmitoleoyl serine; by PORCN lipidation. A sulfotyrosine mark is found at Y274 and Y281. Cystine bridges form between C282/C313, C298/C308, C312/C352, C328/C343, C330/C340, and C335/C336. N299 carries an N-linked (GlcNAc...) asparagine glycan.

The protein belongs to the Wnt family. In terms of assembly, homodimer. Secreted homodimers form a complex with wnt5a homodimers; tyrosine sulfation of both wnt11 and wnt5a by tpst1 is required for this interaction. Interacts with the transmembrane receptor fzd7/fz7. Interacts with lrp6 and ryk. Interacts with tdgf1/frl1. Interacts weakly with frzb1 and strongly with frzb2/crescent. Interaction with frzb2/crescent antagonizes wnt11 function in the neuroectoderm, but enhances it in mesodermal tissue. Post-translationally, glycosylation is required for protein secretion. Palmitoleoylation is required for efficient binding to frizzled receptors. Depalmitoleoylation leads to Wnt signaling pathway inhibition.

It is found in the secreted. It localises to the extracellular space. Its subcellular location is the extracellular matrix. In terms of biological role, ligand for the frizzled7 transmembrane receptor. Primarily acts via non-canonical Wnt pathways mediated by either Ca(2+) and PKC, or by JNK and dvl2/dsh. Depending on the cellular context, can also signal via the canonical Wnt pathway mediated by beta-catenin and dvl2/dsh. May also inhibit canonical Wnt signaling. Maternally initiates dorsal/ventral axis formation by a canonical route, which signals via lrp6. In a complex with wnt5a, activates the canonical and non-canonical processes involved in axis formation. In the non-canonical pathway, acts through fzd7/fz7 to induce phosphorylation of dvl2/dsh. Signals through a non-canonical Wnt pathway to regulate convergent extension movements during gastrulation. Interactions with the secreted Wnt antagonist sfrp5 to coordinate foregut development, acting via a non-canonical wnt pathway whereby sfrp5 restricts wnt11b activity to prevent inappropriate foregut formation. Mediates cardiogenesis via non-canonical Wnt signaling involving JNK-activation and PKC. Acts redundantly with wnt11/wnt11r during pronephros induction. The protein is Protein Wnt-11b-2 of Xenopus tropicalis (Western clawed frog).